A 324-amino-acid polypeptide reads, in one-letter code: MKKEDLRIVYMGTPDFAVEALQCLVEGGYNVVGVITMPDKPAGRGHKIQYSPVKQYALDHQLPLLQPEKLKDEEFIQALREWKADLQIVVAFRMLPEVVWNMPRLGTFNLHASLLPQYRGAAPINWAVINGDTETGITTFFLKHEIDTGEVIQQVRIPIADTDNVEIVHDKLMHLGGRLVIETVDAILEGKVKSIPQEEMAVAGELRPAPKIFKETCRIDWNQPVKRVYDFIRGLSPYPAAWSELVNPEGEAVVVKIFESEKLPKVHTLAPGSIVTDGKNFLRVAVPDGFVNVLSLQLPGKKRLKTDELLRGFHLTEAFKMKAV.

Position 113–116 (Ser113–Pro116) interacts with (6S)-5,6,7,8-tetrahydrofolate.

This sequence belongs to the Fmt family.

It catalyses the reaction L-methionyl-tRNA(fMet) + (6R)-10-formyltetrahydrofolate = N-formyl-L-methionyl-tRNA(fMet) + (6S)-5,6,7,8-tetrahydrofolate + H(+). Functionally, attaches a formyl group to the free amino group of methionyl-tRNA(fMet). The formyl group appears to play a dual role in the initiator identity of N-formylmethionyl-tRNA by promoting its recognition by IF2 and preventing the misappropriation of this tRNA by the elongation apparatus. The protein is Methionyl-tRNA formyltransferase of Bacteroides fragilis (strain ATCC 25285 / DSM 2151 / CCUG 4856 / JCM 11019 / LMG 10263 / NCTC 9343 / Onslow / VPI 2553 / EN-2).